Here is a 133-residue protein sequence, read N- to C-terminus: MSITMSDSSAYGEELMRERFEHLLKAYEKMALMVAEQEEFNAKIEDMALKLLSEKYDNEAYQAELFYRLSNCVEKVLHNKISITDLKTEYEEILEQTLKKECKAYERSCIENVKLKKRTEQATAYYASSSSEP.

It belongs to the VPS13 family. Interacts with spo13 and spo15.

The protein localises to the cytoplasm. It localises to the cytoskeleton. Its subcellular location is the microtubule organizing center. It is found in the spindle pole body. Its function is as follows. Involved in sporulation. Plays a significant role in modification of the spindle pole body prior to spore formation and is required for initiating forespore membrane formation. Assists in the localization of spo13 to the outer surface of the SPB. The chain is Sporulation-specific protein 2 (spo2) from Schizosaccharomyces pombe (strain 972 / ATCC 24843) (Fission yeast).